We begin with the raw amino-acid sequence, 339 residues long: Methyltransferase ptaI (339 aa).

Belongs to the methyltransferase superfamily.

It participates in secondary metabolite biosynthesis. In terms of biological role, methyltransferase; part of the gene cluster that mediates the biosynthesis of pestheic acid, a diphenyl ether which is a biosynthetic precursor of the unique chloropupukeananes. The biosynthesis initiates from condensation of acetate and malonate units catalyzed by the non-reducing PKS ptaA. As the ptaA protein is TE/CLC domain-deficient, hydrolysis and Claisen cyclization of the polyketide could be catalyzed by ptaB containing a beta-lactamase domain. The ptaB protein might hydrolyze the thioester bond between the ACP of ptaA and the intermediate to release atrochrysone carboxylic acid, which is spontaneously dehydrated to form endocrocin anthrone. Endocrocin anthrone is then converted to endocrocin, catalyzed by the anthrone oxygenase ptaC. Spontaneous decarboxylation of endocrocin occurs to generate emodin. An O-methyltransferase (ptaH or ptaI) could methylate emodin to form physcion. PtaJ could then catalyze the oxidative cleavage of physcion, and rotation of the intermediate could then afford desmethylisosulochrin. PtaF, a putative NADH-dependent oxidoreductase, might also participate in the oxidative cleavage step. Desmethylisosulochrin is then transformed by another O-methyltransferase (ptaH or ptaI) to form isosulochrin. Chlorination of isosulochrin by ptaM in the cyclohexadienone B ring then produces chloroisosulochrin. PtaE is responsible for the oxidative coupling reactions of both benzophenones isosulouchrin and chloroisosulochrin to RES-1214-1 and pestheic acid respectively, regardless of chlorination. This chain is Methyltransferase ptaI, found in Pestalotiopsis fici (strain W106-1 / CGMCC3.15140).